The chain runs to 347 residues: DnaJ protein ERDJ3B (347 aa).

The first 23 residues, Met1 to Gly23, serve as a signal peptide directing secretion. A J domain is found at Ser25–Gly90.

As to quaternary structure, interacts with BIP1.

It localises to the endoplasmic reticulum. Its function is as follows. May play a role in protein folding in the endoplasmic reticulum. This is DnaJ protein ERDJ3B from Oryza sativa subsp. japonica (Rice).